The following is a 436-amino-acid chain: MPNVVVIGAQWGDEGKGKVVDLLTEHAQVVVRFQGGNNAGHTLVVGGQKTVLHLIPSGILHPGKTCVIGNGVVVDPAVLVGEIDALKVRGFLKDDAQLLISDNAHVIFPWHKLLDSFREKARGGSAIGTTGRGIGPAYEDKVARRGIRVRDLLNADRLRTRIEARLPAALDELKDLCAQAGDPVPQLEVPQILAEFTGLGERLKPFVHDASLYLSGQVRRGARILFEGAQGTLLDVDHGTYPFVTSSNCVAGNAAVGSGLGPTAIDKVMGISKAYTTRVGGGPFPTELHDAIGDQLRKMGDEFGTTTGRPRRCGWLDGVVLRYASRVNGLWGMALTKLDVLSGLKTLQICTAYELDGQKVMELPGDYEDLARVKPIYETLQGWDEQIAGVRTFDELPENAKRYVRRVEEVSGVPVVCVSVGADRGETVLLQNPFRS.

Residues 12-18 (GDEGKGK) and 40-42 (GHT) contribute to the GTP site. D13 (proton acceptor) is an active-site residue. Mg(2+) contacts are provided by D13 and G40. IMP contacts are provided by residues 13 to 16 (DEGK), 38 to 41 (NAGH), T130, R144, Q230, T245, and R309. The active-site Proton donor is H41. 305 to 311 (TTTGRPR) serves as a coordination point for substrate. Residues R311, 337–339 (KLD), and 419–421 (SVG) each bind GTP.

This sequence belongs to the adenylosuccinate synthetase family. As to quaternary structure, homodimer. It depends on Mg(2+) as a cofactor.

It localises to the cytoplasm. The catalysed reaction is IMP + L-aspartate + GTP = N(6)-(1,2-dicarboxyethyl)-AMP + GDP + phosphate + 2 H(+). It participates in purine metabolism; AMP biosynthesis via de novo pathway; AMP from IMP: step 1/2. Functionally, plays an important role in the de novo pathway of purine nucleotide biosynthesis. Catalyzes the first committed step in the biosynthesis of AMP from IMP. The chain is Adenylosuccinate synthetase from Myxococcus xanthus (strain DK1622).